A 409-amino-acid chain; its full sequence is Histone deacetylase 7 (409 aa).

Positions 11–324 are histone deacetylase; that stretch reads RVSYFYEPMI…WCYETAIAVG (314 aa). Residue H148 is the Proton donor/acceptor of the active site. D267 lines the Zn(2+) pocket. The segment at 383 to 409 is disordered; it reads PFQDTPSSSQATEAAEVDMEKRNDPRI. The span at 384–394 shows a compositional bias: polar residues; sequence FQDTPSSSQAT. A compositionally biased stretch (basic and acidic residues) spans 400 to 409; it reads DMEKRNDPRI.

Belongs to the histone deacetylase family. HD type 1 subfamily. It depends on Zn(2+) as a cofactor. In terms of tissue distribution, low expression in flowers.

Its subcellular location is the nucleus. The catalysed reaction is N(6)-acetyl-L-lysyl-[histone] + H2O = L-lysyl-[histone] + acetate. Responsible for the deacetylation of lysine residues on the N-terminal part of the core histones (H2A, H2B, H3 and H4). Histone deacetylation gives a tag for epigenetic repression and plays an important role in transcriptional regulation, cell cycle progression and developmental events. May be involved in flowering induction. Histone deacetylases act via the formation of large multiprotein complexes. The chain is Histone deacetylase 7 (HDA7) from Arabidopsis thaliana (Mouse-ear cress).